The chain runs to 122 residues: MIQPQTYLNVADNSGARKLMCIRIVGASNRRYAHIGDVIVAVIKEAVPNMPLERSEVIRAVIVRTCKELNRGNGMIIRYDDNAAVVIDQEGNPKGTRVFGAIARELRQLNFTKIVSLAPEVL.

The protein belongs to the universal ribosomal protein uL14 family. In terms of assembly, part of the 50S ribosomal subunit.

The protein resides in the plastid. The protein localises to the chloroplast. In terms of biological role, binds to 23S rRNA. The protein is Large ribosomal subunit protein uL14c of Buxus microphylla (Littleleaf boxwood).